The following is a 368-amino-acid chain: Zinc finger protein 24 (368 aa).

Lys-22 participates in a covalent cross-link: Glycyl lysine isopeptide (Lys-Gly) (interchain with G-Cter in SUMO2). Lys-27 is covalently cross-linked (Glycyl lysine isopeptide (Lys-Gly) (interchain with G-Cter in SUMO1); alternate). Lys-27 participates in a covalent cross-link: Glycyl lysine isopeptide (Lys-Gly) (interchain with G-Cter in SUMO2); alternate. The SCAN box domain maps to 52 to 134 (RQRFRQFGYQ…TVLEDLESEL (83 aa)). Phosphoserine is present on residues Ser-132 and Ser-142. Residues Lys-147, Lys-177, and Lys-236 each participate in a glycyl lysine isopeptide (Lys-Gly) (interchain with G-Cter in SUMO2) cross-link. The C2H2-type 1 zinc-finger motif lies at 251 to 273 (HICDECGKHFSQGSALILHQRIH). The necessary and sufficient for nuclear localization stretch occupies residues 251 to 301 (HICDECGKHFSQGSALILHQRIHSGEKPYGCVECGKAFSRSSILVQHQRVH). Phosphoserine is present on Ser-274. Glycyl lysine isopeptide (Lys-Gly) (interchain with G-Cter in SUMO2) cross-links involve residues Lys-277 and Lys-286. C2H2-type zinc fingers lie at residues 279–301 (YGCV…QRVH), 307–329 (YKCL…QRIH), and 335–357 (YECV…QRRH). At Ser-292 the chain carries Phosphoserine. Residue Tyr-335 is modified to Phosphotyrosine. Residues Lys-361 and Lys-367 each participate in a glycyl lysine isopeptide (Lys-Gly) (interchain with G-Cter in SUMO2) cross-link.

Belongs to the krueppel C2H2-type zinc-finger protein family. Sumoylated.

The protein resides in the nucleus. Functionally, transcription factor required for myelination of differentiated oligodendrocytes. Required for the conversion of oligodendrocytes from the premyelinating to the myelinating state. In the developing central nervous system (CNS), involved in the maintenance in the progenitor stage by promoting the cell cycle. Specifically binds to the 5'-TCAT-3' DNA sequence. Has transcription repressor activity in vitro. The polypeptide is Zinc finger protein 24 (Znf24) (Rattus norvegicus (Rat)).